Consider the following 493-residue polypeptide: Transcript termination protein OPG145 (493 aa).

Positions 100–256 (MIKLKRPLYI…NSIINIAKLS (157 aa)) constitute a Helicase ATP-binding domain. 113–120 (LACGFGKT) serves as a coordination point for ATP. The DESH box motif lies at 206 to 209 (DESH).

Belongs to the helicase family. Poxviruses subfamily. As to quaternary structure, interacts with OPG087. Might be part of a transcription complex composed at least of OPG087, OPG110, and OPG145.

It is found in the virion. Functionally, DNA helicase which seems to act as a postreplicative transcription termination factor. Involved in ATP-dependent release of nascent RNA. Forms a stable complex with single-stranded DNA, and to a lesser extent RNA. This Variola virus (isolate Human/India/Ind3/1967) (VARV) protein is Transcript termination protein OPG145 (OPG145).